The chain runs to 613 residues: Dihydroxy-acid dehydratase (613 aa).

Asp81 serves as a coordination point for Mg(2+). Residue Cys122 coordinates [2Fe-2S] cluster. Positions 123 and 124 each coordinate Mg(2+). Lys124 bears the N6-carboxylysine mark. Cys195 serves as a coordination point for [2Fe-2S] cluster. Glu491 is a binding site for Mg(2+). The active-site Proton acceptor is Ser517.

Belongs to the IlvD/Edd family. Homodimer. The cofactor is [2Fe-2S] cluster. It depends on Mg(2+) as a cofactor.

The enzyme catalyses (2R)-2,3-dihydroxy-3-methylbutanoate = 3-methyl-2-oxobutanoate + H2O. It carries out the reaction (2R,3R)-2,3-dihydroxy-3-methylpentanoate = (S)-3-methyl-2-oxopentanoate + H2O. It participates in amino-acid biosynthesis; L-isoleucine biosynthesis; L-isoleucine from 2-oxobutanoate: step 3/4. The protein operates within amino-acid biosynthesis; L-valine biosynthesis; L-valine from pyruvate: step 3/4. Functions in the biosynthesis of branched-chain amino acids. Catalyzes the dehydration of (2R,3R)-2,3-dihydroxy-3-methylpentanoate (2,3-dihydroxy-3-methylvalerate) into 2-oxo-3-methylpentanoate (2-oxo-3-methylvalerate) and of (2R)-2,3-dihydroxy-3-methylbutanoate (2,3-dihydroxyisovalerate) into 2-oxo-3-methylbutanoate (2-oxoisovalerate), the penultimate precursor to L-isoleucine and L-valine, respectively. This is Dihydroxy-acid dehydratase from Buchnera aphidicola subsp. Schlechtendalia chinensis.